A 548-amino-acid chain; its full sequence is Lysine--tRNA ligase (548 aa).

The 'HIGH' region signature appears at 52–60 (PSGLPHIGT). A 'KMSKS' region motif is present at residues 300–304 (KISKS). Lysine 303 contributes to the ATP binding site.

Belongs to the class-I aminoacyl-tRNA synthetase family.

The protein resides in the cytoplasm. It catalyses the reaction tRNA(Lys) + L-lysine + ATP = L-lysyl-tRNA(Lys) + AMP + diphosphate. The polypeptide is Lysine--tRNA ligase (Mesorhizobium japonicum (strain LMG 29417 / CECT 9101 / MAFF 303099) (Mesorhizobium loti (strain MAFF 303099))).